The chain runs to 298 residues: Probable oxidoreductase (298 aa).

Val-9 to Thr-33 serves as a coordination point for NAD(+). Ser-139 provides a ligand contact to substrate. Tyr-165 acts as the Proton acceptor in catalysis.

Belongs to the short-chain dehydrogenases/reductases (SDR) family.

The sequence is that of Probable oxidoreductase from Streptomyces antibioticus.